The sequence spans 454 residues: tRNA-2-methylthio-N(6)-dimethylallyladenosine synthase (454 aa).

Positions Arg6–Ser122 constitute an MTTase N-terminal domain. The [4Fe-4S] cluster site is built by Cys15, Cys51, Cys85, Cys157, Cys161, and Cys164. In terms of domain architecture, Radical SAM core spans Arg143–Arg384. The TRAM domain occupies Gln383–Ser447.

Belongs to the methylthiotransferase family. MiaB subfamily. Monomer. The cofactor is [4Fe-4S] cluster.

It localises to the cytoplasm. It catalyses the reaction N(6)-dimethylallyladenosine(37) in tRNA + (sulfur carrier)-SH + AH2 + 2 S-adenosyl-L-methionine = 2-methylsulfanyl-N(6)-dimethylallyladenosine(37) in tRNA + (sulfur carrier)-H + 5'-deoxyadenosine + L-methionine + A + S-adenosyl-L-homocysteine + 2 H(+). Catalyzes the methylthiolation of N6-(dimethylallyl)adenosine (i(6)A), leading to the formation of 2-methylthio-N6-(dimethylallyl)adenosine (ms(2)i(6)A) at position 37 in tRNAs that read codons beginning with uridine. The protein is tRNA-2-methylthio-N(6)-dimethylallyladenosine synthase of Acaryochloris marina (strain MBIC 11017).